A 366-amino-acid chain; its full sequence is Chorismate synthase (366 aa).

R48 is a binding site for NADP(+). Residues 125-127 (RSS), 238-239 (NA), G278, 293-297 (KPTSS), and R319 each bind FMN.

It belongs to the chorismate synthase family. Homotetramer. The cofactor is FMNH2.

It carries out the reaction 5-O-(1-carboxyvinyl)-3-phosphoshikimate = chorismate + phosphate. Its pathway is metabolic intermediate biosynthesis; chorismate biosynthesis; chorismate from D-erythrose 4-phosphate and phosphoenolpyruvate: step 7/7. Its function is as follows. Catalyzes the anti-1,4-elimination of the C-3 phosphate and the C-6 proR hydrogen from 5-enolpyruvylshikimate-3-phosphate (EPSP) to yield chorismate, which is the branch point compound that serves as the starting substrate for the three terminal pathways of aromatic amino acid biosynthesis. This reaction introduces a second double bond into the aromatic ring system. The polypeptide is Chorismate synthase (Hydrogenovibrio crunogenus (strain DSM 25203 / XCL-2) (Thiomicrospira crunogena)).